Here is a 318-residue protein sequence, read N- to C-terminus: Methionyl-tRNA formyltransferase (318 aa).

(6S)-5,6,7,8-tetrahydrofolate is bound at residue 112 to 115 (SILP).

The protein belongs to the Fmt family.

It carries out the reaction L-methionyl-tRNA(fMet) + (6R)-10-formyltetrahydrofolate = N-formyl-L-methionyl-tRNA(fMet) + (6S)-5,6,7,8-tetrahydrofolate + H(+). Its function is as follows. Attaches a formyl group to the free amino group of methionyl-tRNA(fMet). The formyl group appears to play a dual role in the initiator identity of N-formylmethionyl-tRNA by promoting its recognition by IF2 and preventing the misappropriation of this tRNA by the elongation apparatus. This Shewanella baltica (strain OS223) protein is Methionyl-tRNA formyltransferase.